A 304-amino-acid polypeptide reads, in one-letter code: D-alanine--D-alanine ligase (304 aa).

The region spanning 103–299 (KLIWQALGLP…FADLCIEILK (197 aa)) is the ATP-grasp domain. 129 to 184 (EEKLGLPMFVKPAAEGSSVGVVKVKGKGRLKSVYEELKHFQGEIIAERFIGGGEYS) lines the ATP pocket. 3 residues coordinate Mg(2+): D253, E266, and N268.

This sequence belongs to the D-alanine--D-alanine ligase family. The cofactor is Mg(2+). Requires Mn(2+) as cofactor.

Its subcellular location is the cytoplasm. It catalyses the reaction 2 D-alanine + ATP = D-alanyl-D-alanine + ADP + phosphate + H(+). It participates in cell wall biogenesis; peptidoglycan biosynthesis. In terms of biological role, cell wall formation. In Neisseria meningitidis serogroup A / serotype 4A (strain DSM 15465 / Z2491), this protein is D-alanine--D-alanine ligase.